Here is a 299-residue protein sequence, read N- to C-terminus: HTH-type transcriptional regulator CynR (299 aa).

The 58-residue stretch at 1–58 folds into the HTH lysR-type domain; the sequence is MLSRHINYFLAVAEHGSFTRAASALHVSQPALSQQIRQLEESLGVPLFDRSGRTIRLT. Residues 18 to 37 constitute a DNA-binding region (H-T-H motif); the sequence is FTRAASALHVSQPALSQQIR.

The protein belongs to the LysR transcriptional regulatory family.

The protein resides in the cytoplasm. Positively regulates the cynTSX operon, and negatively regulates its own transcription. Binds specifically to the cynR-cynTSX intergenic region. This Escherichia coli (strain K12) protein is HTH-type transcriptional regulator CynR (cynR).